Consider the following 447-residue polypeptide: Gustatory receptor family protein 3 (447 aa).

Residues 1 to 69 lie on the Extracellular side of the membrane; that stretch reads MTITASNTLE…HTHSSARNTM (69 aa). Residues 70–90 form a helical membrane-spanning segment; it reads FKWPLTIYNYLTLAILTAATI. At 91–116 the chain is on the cytoplasmic side; the sequence is RRISQIKQKSATNEEKDAAFHVLNPT. The chain crosses the membrane as a helical span at residues 117–137; it reads FVLTLCHALLMFSGLAAGFLL. Residues 138 to 171 lie on the Extracellular side of the membrane; it reads LKLQKQREKMYHVLDQGLGRNRNEEHDSHHFKLN. Residues 172 to 192 traverse the membrane as a helical segment; that stretch reads KLFISISFSFAAALSFVQIAT. Residues 193–211 are Cytoplasmic-facing; sequence KMRYLDLPDTPDLINRKIY. Residues 212 to 232 traverse the membrane as a helical segment; the sequence is FVILEGYVIFIASSCISLVAI. Residues 233-292 lie on the Extracellular side of the membrane; the sequence is LFFQLCRILQFSIGQLIEEMVPKEKEECPLPEQSLQQIHDVQIHYQEISNAKLYIEQNFS. A helical transmembrane segment spans residues 293-313; it reads FSLFYTYGCCIPLTCLLGYIA. Topologically, residues 314-328 are cytoplasmic; that stretch reads FRNGIQADMAETFSV. A helical transmembrane segment spans residues 329 to 349; that stretch reads AIWLTNTMLALMLFSIPAFMI. The Extracellular segment spans residues 350–405; that stretch reads AEEGDKLLTASFKMYHETLCEERDLLVLSQMSFLSFQMHATKLTLTAGNFFMMNRK. The chain crosses the membrane as a helical span at residues 406–426; the sequence is IMISLFSAIFTYFLILVQFDA. At 427–447 the chain is on the cytoplasmic side; that stretch reads EKERAGECNNQSRVLIVQPPV.

Belongs to the insect chemoreceptor superfamily. Gustatory receptor (GR) family. As to expression, expressed in I2 pharyngeal neurons.

The protein localises to the membrane. Chemoreceptor involved in light-induced avoidance behavior. Probably acts as a molecular sensor in I2 pharyngeal neurons, required for the inhibition of feeding in response to light and hydrogen peroxide. Involved in circadian rhythms, probably by acting as a light sensor. In contrast to lite-1, does not act as a photoreceptor. In Caenorhabditis elegans, this protein is Gustatory receptor family protein 3.